The primary structure comprises 565 residues: Periplasmic trehalase (565 aa).

A signal peptide spans 1 to 30 (MKSPAPSRPQKMALIPACIFLCFAALSVQA). Substrate-binding positions include arginine 152, 159–160 (WD), asparagine 196, 205–207 (RSQ), 277–279 (RPE), and glycine 310. Residues aspartate 312 and glutamate 496 each act as proton donor/acceptor in the active site. Glutamate 511 provides a ligand contact to substrate. The tract at residues 538-565 (PCDNVPATRPTVKSATTQPSTKEAQPTP) is disordered. Polar residues predominate over residues 548-565 (TVKSATTQPSTKEAQPTP).

The protein belongs to the glycosyl hydrolase 37 family. As to quaternary structure, monomer.

It is found in the periplasm. It carries out the reaction alpha,alpha-trehalose + H2O = alpha-D-glucose + beta-D-glucose. In terms of biological role, provides the cells with the ability to utilize trehalose at high osmolarity by splitting it into glucose molecules that can subsequently be taken up by the phosphotransferase-mediated uptake system. The sequence is that of Periplasmic trehalase from Escherichia coli O8 (strain IAI1).